Here is a 150-residue protein sequence, read N- to C-terminus: Flagellar assembly factor FliW (150 aa).

Belongs to the FliW family. In terms of assembly, interacts with translational regulator CsrA and flagellin(s).

It is found in the cytoplasm. Functionally, acts as an anti-CsrA protein, binds CsrA and prevents it from repressing translation of its target genes, one of which is flagellin. Binds to flagellin and participates in the assembly of the flagellum. This Caldanaerobacter subterraneus subsp. tengcongensis (strain DSM 15242 / JCM 11007 / NBRC 100824 / MB4) (Thermoanaerobacter tengcongensis) protein is Flagellar assembly factor FliW.